A 424-amino-acid polypeptide reads, in one-letter code: GDP-fucose protein O-fucosyltransferase 2 (424 aa).

The first 20 residues, 1–20 (MHFFPIQLLVLFFAEKIAFA), serve as a signal peptide directing secretion. GDP-beta-L-fucose is bound at residue 51–55 (GEGFN). Glu52 serves as the catalytic Proton acceptor. The cysteines at positions 154 and 187 are disulfide-linked. Asn205 is a glycosylation site (N-linked (GlcNAc...) asparagine). GDP-beta-L-fucose is bound by residues 288 to 290 (HWR), Asp366, and 383 to 384 (TF). An intrachain disulfide couples Cys407 to Cys414.

It belongs to the glycosyltransferase 68 family. As to expression, expressed in the anterior part of embryos, in the hypodermal and neuronal cells of the head. Expressed at different levels in a variety of cell types after hatching, including neuronal, hypodermal, muscle, intestinal, and somatic gonadal cells. Expressed in the nerve ring around the pharynx, in dorsal and ventral nerve cords, intestine, and a variety of hypodermal cells of L1-L3 larvae. Expressed in gonadal sheath cells, spermatheca, and tissues surrounding the vulva of adult hermaphrodites, and in the body wall muscle and hypodermal cells of adults of both sexes.

It localises to the endoplasmic reticulum. The protein resides in the golgi apparatus. The catalysed reaction is L-seryl-[protein] + GDP-beta-L-fucose = 3-O-(alpha-L-fucosyl)-L-seryl-[protein] + GDP + H(+). It carries out the reaction L-threonyl-[protein] + GDP-beta-L-fucose = 3-O-(alpha-L-fucosyl)-L-threonyl-[protein] + GDP + H(+). It functions in the pathway protein modification; protein glycosylation. In terms of biological role, catalyzes the reaction that attaches fucose through an O-glycosidic linkage to a conserved serine or threonine residue in the consensus sequence C1-X-X-S/T-C2 of thrombospondin type I repeats (TSRs) where C1 and C2 are the first and second cysteines of the repeat, respectively. O-fucosylates members of several protein families including the ADAMTS superfamily and the thrombospondin (TSP) and spondin families. This is GDP-fucose protein O-fucosyltransferase 2 (pad-2) from Caenorhabditis elegans.